We begin with the raw amino-acid sequence, 145 residues long: MIALIQRVSRASVVVDNQTIGAIDKGLLVLLGVEQQDTREKMEKLATKVMSYRVFSDENGKMNLNLEQVGGSLLVVSQFTLAADTGRGLRPSFSGAGTPDQALALYEEFVAFCRAKGVTTETGQFGADMQVSLVNDGPVTFNLQV.

A Gly-cisPro motif, important for rejection of L-amino acids motif is present at residues 137–138 (GP).

Belongs to the DTD family. Homodimer.

The protein resides in the cytoplasm. The enzyme catalyses glycyl-tRNA(Ala) + H2O = tRNA(Ala) + glycine + H(+). It catalyses the reaction a D-aminoacyl-tRNA + H2O = a tRNA + a D-alpha-amino acid + H(+). Its function is as follows. An aminoacyl-tRNA editing enzyme that deacylates mischarged D-aminoacyl-tRNAs. Also deacylates mischarged glycyl-tRNA(Ala), protecting cells against glycine mischarging by AlaRS. Acts via tRNA-based rather than protein-based catalysis; rejects L-amino acids rather than detecting D-amino acids in the active site. By recycling D-aminoacyl-tRNA to D-amino acids and free tRNA molecules, this enzyme counteracts the toxicity associated with the formation of D-aminoacyl-tRNA entities in vivo and helps enforce protein L-homochirality. The polypeptide is D-aminoacyl-tRNA deacylase (Shewanella baltica (strain OS223)).